Consider the following 478-residue polypeptide: DNA-directed RNA polymerase II subunit RPB1 (478 aa).

Residues cysteine 68, cysteine 71, cysteine 78, histidine 81, cysteine 108, cysteine 111, and cysteine 149 each contribute to the Zn(2+) site. Mg(2+) contacts are provided by aspartate 474 and aspartate 476.

Belongs to the RNA polymerase beta' chain family. As to quaternary structure, component of the RNA polymerase II (Pol II) complex consisting of 12 subunits. Post-translationally, phosphorylation activates POL II.

It is found in the nucleus. It catalyses the reaction RNA(n) + a ribonucleoside 5'-triphosphate = RNA(n+1) + diphosphate. In terms of biological role, DNA-dependent RNA polymerase catalyzes the transcription of DNA into RNA using the four ribonucleoside triphosphates as substrates. Largest and catalytic component of RNA polymerase II which synthesizes mRNA precursors and many functional non-coding RNAs. Forms the polymerase active center together with the second largest subunit. Pol II is the central component of the basal RNA polymerase II transcription machinery. It is composed of mobile elements that move relative to each other. RPB1 is part of the core element with the central large cleft, the clamp element that moves to open and close the cleft and the jaws that are thought to grab the incoming DNA template. At the start of transcription, a single-stranded DNA template strand of the promoter is positioned within the central active site cleft of Pol II. A bridging helix emanates from RPB1 and crosses the cleft near the catalytic site and is thought to promote translocation of Pol II by acting as a ratchet that moves the RNA-DNA hybrid through the active site by switching from straight to bent conformations at each step of nucleotide addition. During transcription elongation, Pol II moves on the template as the transcript elongates. Elongation is influenced by the phosphorylation status of the C-terminal domain (CTD) of Pol II largest subunit (RPB1), which serves as a platform for assembly of factors that regulate transcription initiation, elongation, termination and mRNA processing. This is DNA-directed RNA polymerase II subunit RPB1 (RPB1) from Euplotoides octocarinatus (Freshwater ciliate).